Reading from the N-terminus, the 301-residue chain is D-alanine--D-alanine ligase A (301 aa).

Residues 99 to 293 (KRILAFGNVR…FEELLDTIIE (195 aa)) enclose the ATP-grasp domain. 126–181 (IENLGYPVFVKPNNGGSSVATTLVESKEAVKDAVLEALKYDTEVMIEEYIKGDEIT) provides a ligand contact to ATP. Mg(2+)-binding residues include Asp248, Glu260, and Asn262.

The protein belongs to the D-alanine--D-alanine ligase family. It depends on Mg(2+) as a cofactor. Requires Mn(2+) as cofactor.

Its subcellular location is the cytoplasm. It carries out the reaction 2 D-alanine + ATP = D-alanyl-D-alanine + ADP + phosphate + H(+). It participates in cell wall biogenesis; peptidoglycan biosynthesis. Its function is as follows. Cell wall formation. The protein is D-alanine--D-alanine ligase A of Clostridium perfringens (strain 13 / Type A).